Consider the following 126-residue polypeptide: Probable prefoldin subunit 4 (126 aa).

This sequence belongs to the prefoldin subunit beta family. Heterohexamer of two PFD-alpha type and four PFD-beta type subunits.

In terms of biological role, binds specifically to cytosolic chaperonin (c-CPN) and transfers target proteins to it. Binds to nascent polypeptide chain and promotes folding in an environment in which there are many competing pathways for nonnative proteins. Appears to play a non-essential role. The protein is Probable prefoldin subunit 4 of Caenorhabditis briggsae.